Reading from the N-terminus, the 458-residue chain is Ribosomal protein uS12 methylthiotransferase RimO (458 aa).

The region spanning 6–116 (PKVGFVSLGC…VMEAVHAALP (111 aa)) is the MTTase N-terminal domain. [4Fe-4S] cluster contacts are provided by C15, C51, C80, C147, C151, and C154. Residues 133 to 371 (LTPRHYAYLK…AKQAQISALR (239 aa)) form the Radical SAM core domain. The region spanning 373 to 441 (ESKIGSVQQC…EHDLFGDALP (69 aa)) is the TRAM domain.

It belongs to the methylthiotransferase family. RimO subfamily. Requires [4Fe-4S] cluster as cofactor.

The protein localises to the cytoplasm. The enzyme catalyses L-aspartate(89)-[ribosomal protein uS12]-hydrogen + (sulfur carrier)-SH + AH2 + 2 S-adenosyl-L-methionine = 3-methylsulfanyl-L-aspartate(89)-[ribosomal protein uS12]-hydrogen + (sulfur carrier)-H + 5'-deoxyadenosine + L-methionine + A + S-adenosyl-L-homocysteine + 2 H(+). Its function is as follows. Catalyzes the methylthiolation of an aspartic acid residue of ribosomal protein uS12. The sequence is that of Ribosomal protein uS12 methylthiotransferase RimO from Xanthomonas euvesicatoria pv. vesicatoria (strain 85-10) (Xanthomonas campestris pv. vesicatoria).